Here is a 452-residue protein sequence, read N- to C-terminus: Cell division protein FtsZ (452 aa).

Residues 24–28 (GAGSN), 111–113 (GTG), Glu142, Arg146, and Asp190 contribute to the GTP site.

The protein belongs to the FtsZ family. In terms of assembly, homodimer. Polymerizes to form a dynamic ring structure in a strictly GTP-dependent manner. Interacts directly with several other division proteins.

The protein localises to the cytoplasm. Its function is as follows. Essential cell division protein that forms a contractile ring structure (Z ring) at the future cell division site. The regulation of the ring assembly controls the timing and the location of cell division. One of the functions of the FtsZ ring is to recruit other cell division proteins to the septum to produce a new cell wall between the dividing cells. Binds GTP and shows GTPase activity. This is Cell division protein FtsZ from Rickettsia typhi (strain ATCC VR-144 / Wilmington).